We begin with the raw amino-acid sequence, 273 residues long: Ribosomal RNA small subunit methyltransferase I (273 aa).

It belongs to the methyltransferase superfamily. RsmI family.

Its subcellular location is the cytoplasm. The catalysed reaction is cytidine(1402) in 16S rRNA + S-adenosyl-L-methionine = 2'-O-methylcytidine(1402) in 16S rRNA + S-adenosyl-L-homocysteine + H(+). Functionally, catalyzes the 2'-O-methylation of the ribose of cytidine 1402 (C1402) in 16S rRNA. The sequence is that of Ribosomal RNA small subunit methyltransferase I from Xylella fastidiosa (strain Temecula1 / ATCC 700964).